The chain runs to 290 residues: MSESEYKIADGSGKFLQAVKDGRRMKDAQWSKGRILLSNKRIVLAGSEGKRNLPLSEVQGLSGRHDVNQTVAKVGNYVSIRMTNESVMLVSLGDNTETFESKLYGALLDQTELQVKHPAVEGGVVTDEQFERARIKVDESELSVAMSNGSFVSVELDDVGSAEAASLEVNGDTKPVLKVEHTVNRDTSVQTYFATDSHTASILESLLTKEAEKSQGSVELSETEKRVLMALYSGVSSFEIPDFLGMDVDEVESIFERLIEVDVLEEVRKRREVTMKTRGRNIASEAINEE.

In terms of assembly, interacts with chemotaxis (Che) proteins as well as flagella accessory (Fla) proteins.

Involved in taxis signal transduction. Essential for the ability to control the direction of flagellar rotation. May have a role between CheY and the flagellum. The sequence is that of Taxis protein CheF1 (cheF1) from Halobacterium salinarum (strain ATCC 29341 / DSM 671 / R1).